A 178-amino-acid polypeptide reads, in one-letter code: Large ribosomal subunit protein uL6 (178 aa).

It belongs to the universal ribosomal protein uL6 family. In terms of assembly, part of the 50S ribosomal subunit.

Its function is as follows. This protein binds to the 23S rRNA, and is important in its secondary structure. It is located near the subunit interface in the base of the L7/L12 stalk, and near the tRNA binding site of the peptidyltransferase center. The sequence is that of Large ribosomal subunit protein uL6 from Sulfurovum sp. (strain NBC37-1).